Reading from the N-terminus, the 341-residue chain is Elongation factor Ts (341 aa).

The interval 80-83 is involved in Mg(2+) ion dislocation from EF-Tu; it reads TDFV.

It belongs to the EF-Ts family.

The protein resides in the cytoplasm. Functionally, associates with the EF-Tu.GDP complex and induces the exchange of GDP to GTP. It remains bound to the aminoacyl-tRNA.EF-Tu.GTP complex up to the GTP hydrolysis stage on the ribosome. The chain is Elongation factor Ts from Lactobacillus johnsonii (strain CNCM I-12250 / La1 / NCC 533).